We begin with the raw amino-acid sequence, 1693 residues long: Latrophilin Cirl (1693 aa).

The Extracellular portion of the chain corresponds to 1–753; sequence MLPTILSISY…LFTMFDGNMR (753 aa). An SUEL-type lectin domain is found at 25-114; it reads ACEGKKLTIE…KYLEAHYQCI (90 aa). N-linked (GlcNAc...) asparagine glycosylation is present at N142. 2 stretches are compositionally biased toward polar residues: residues 185 to 198 and 256 to 265; these read TAVT…STTA and NVTSPSNTRI. The tract at residues 185-299 is disordered; that stretch reads TAVTHSTPWS…PGTAASGSVA (115 aa). An N-linked (GlcNAc...) asparagine glycan is attached at N256. Over residues 275–299 the composition is skewed to low complexity; sequence DDGTLLTTKSSPNRPPGTAASGSVA. N-linked (GlcNAc...) asparagine glycosylation is found at N301, N340, N397, N641, N689, and N716. Residues 375–399 are disordered; sequence YDEYDDDASSTTPAPSGGDCLHNSS. The GAIN-B domain occupies 564-740; sequence KKSKIYSSVV…AILMDVVDEH (177 aa). 2 cysteine pairs are disulfide-bonded: C695–C722 and C710–C724. Positions 695 to 740 are GPS; that stretch reads CVFWNYIDHAWSANGCSLESTNRTHSVCSCNHLTNFAILMDVVDEH. A helical transmembrane segment spans residues 754-774; it reads IFIYISIGICVVFIVIALLTL. Residues 775-787 lie on the Cytoplasmic side of the membrane; that stretch reads KLFNGVFVKSART. Residues 788-808 form a helical membrane-spanning segment; it reads SIYTSIYLCLLAIELLFLLGI. Residues 809–814 are Extracellular-facing; the sequence is EQTETS. Residues 815–835 traverse the membrane as a helical segment; sequence IFCGFITIFLHCAILSGTAWF. Over 836-861 the chain is Cytoplasmic; it reads CYEAFHSYSTLTSDELLLEVDQTPKV. A helical membrane pass occupies residues 862–882; sequence NCYYLLSYGLSLSVVAISLVI. Topologically, residues 883–906 are extracellular; it reads DPSTYTQNDYCVLMEANALFYATF. The chain crosses the membrane as a helical span at residues 907-927; sequence VVPVLVFFVAAIGYTFLSWII. The Cytoplasmic segment spans residues 928–954; that stretch reads MCRKSRTGLKTKEHTRLASVRFDIRCS. Residues 955–975 form a helical membrane-spanning segment; sequence FVFLLLLSAVWCSAYFYLRGA. Residues 976–985 are Extracellular-facing; it reads KMDDDTADVY. A helical transmembrane segment spans residues 986–1006; it reads GYCFICFNTLLGLYIFVFHCI. The Cytoplasmic segment spans residues 1007–1693; sequence QNEKIRREYR…VRCYLEPLAK (687 aa). A Phosphoserine modification is found at S1142. Disordered stretches follow at residues 1156 to 1194, 1220 to 1247, 1294 to 1319, 1433 to 1521, and 1601 to 1673; these read HKQQ…LKTP, KPNS…LHSR, QQQL…AEQH, GGGS…SDER, and LAVN…QQRH. Residues S1239 and S1246 each carry the phosphoserine modification. The span at 1294 to 1309 shows a compositional bias: low complexity; it reads QQQLRRQQLHQQQQQL. Phosphoserine is present on residues S1310 and S1311. The segment covering 1439–1464 has biased composition (low complexity); it reads GGSVSSRSQQQQLKKQQQQQSLAQQR. Composition is skewed to acidic residues over residues 1472–1486 and 1496–1507; these read DDDD…EEAT and CDEDEEEDESDL. Residues 1508-1521 are compositionally biased toward basic and acidic residues; sequence EHDAHGLPPQSDER. Residues 1630 to 1655 are compositionally biased toward low complexity; the sequence is LQKLSPQSTTSSSSHTSHSNPNLHPH. The segment covering 1656–1672 has biased composition (basic residues); it reads QLTHPHPHQHPPHHQQR.

It belongs to the G-protein coupled receptor 2 family. LN-TM7 subfamily. As to quaternary structure, forms a heterodimer, consisting of a large extracellular region non-covalently linked to a seven-transmembrane moiety. Proteolytically cleaved into 2 subunits, an extracellular subunit and a seven-transmembrane subunit.

The protein resides in the cell membrane. In Drosophila sechellia (Fruit fly), this protein is Latrophilin Cirl.